Consider the following 362-residue polypeptide: MAHHDPIHLIAPRAGLAQLNERSRDIFRQIVESYLATGEPVGSRNISRLIAMPLSPASVRNVMADLEQLGLIYAPHTSAGRLPTELGLRFFVDALMQVGDLNDAERQSIQSQLTSVGQAQSVEAALDQALTRLSGLTRAAAVVLTPKSNARLKHIEFVRLEPEKALVILVGEDGQVENRVLTLPPGVPSSAITEAGNFLNSRIRGRTLAEARLELETALGEARAELDQLTQKVISAGIASWSGGENEDRQLIVRGHANLLEDLHALEDLERVRLLFDDLETKRGVIDLLGRAETAEGVRIFIGSENKLFSLSGSSTIISPYRDAAGHIVGVLGVIGPTRLNYARVIPTVDYAARIVSRLLGG.

This sequence belongs to the HrcA family.

Functionally, negative regulator of class I heat shock genes (grpE-dnaK-dnaJ and groELS operons). Prevents heat-shock induction of these operons. This Bradyrhizobium diazoefficiens (strain JCM 10833 / BCRC 13528 / IAM 13628 / NBRC 14792 / USDA 110) protein is Heat-inducible transcription repressor HrcA.